Reading from the N-terminus, the 332-residue chain is Acetyl-coenzyme A carboxylase carboxyl transferase subunit beta (332 aa).

Residues 24-293 form the CoA carboxyltransferase N-terminal domain; sequence LWIKCPDSGH…PEVIVESEPE (270 aa). The interval 288–332 is disordered; that stretch reads VESEPEPEPEPVVAEIIPPTSDLPVSAPAPAPVAAQTPAPAAPSA. The segment covering 298–332 has biased composition (low complexity); it reads PVVAEIIPPTSDLPVSAPAPAPVAAQTPAPAAPSA.

It belongs to the AccD/PCCB family. As to quaternary structure, acetyl-CoA carboxylase is a heterohexamer composed of biotin carboxyl carrier protein (AccB), biotin carboxylase (AccC) and two subunits each of ACCase subunit alpha (AccA) and ACCase subunit beta (AccD).

The protein localises to the cytoplasm. The catalysed reaction is N(6)-carboxybiotinyl-L-lysyl-[protein] + acetyl-CoA = N(6)-biotinyl-L-lysyl-[protein] + malonyl-CoA. It functions in the pathway lipid metabolism; malonyl-CoA biosynthesis; malonyl-CoA from acetyl-CoA: step 1/1. In terms of biological role, component of the acetyl coenzyme A carboxylase (ACC) complex. Biotin carboxylase (BC) catalyzes the carboxylation of biotin on its carrier protein (BCCP) and then the CO(2) group is transferred by the transcarboxylase to acetyl-CoA to form malonyl-CoA. The sequence is that of Acetyl-coenzyme A carboxylase carboxyl transferase subunit beta from Rhodopseudomonas palustris (strain BisB18).